The following is a 100-amino-acid chain: uncharacterized protein (100 aa).

Positions M1 to I100 constitute an HTH arsR-type domain. Residues V44–R67 constitute a DNA-binding region (H-T-H motif).

This is an uncharacterized protein from Bacillus subtilis (strain 168).